Here is a 180-residue protein sequence, read N- to C-terminus: Hypoxanthine-guanine phosphoribosyltransferase (180 aa).

Diphosphate contacts are provided by lysine 43 and glycine 44. Glutamate 99 and aspartate 100 together coordinate Mg(2+). The active-site Proton acceptor is the aspartate 103. GMP-binding positions include lysine 131, 152 to 153 (FV), and aspartate 159. Residue arginine 165 participates in diphosphate binding.

It belongs to the purine/pyrimidine phosphoribosyltransferase family. It depends on Mg(2+) as a cofactor.

The protein resides in the cytoplasm. It catalyses the reaction IMP + diphosphate = hypoxanthine + 5-phospho-alpha-D-ribose 1-diphosphate. The catalysed reaction is GMP + diphosphate = guanine + 5-phospho-alpha-D-ribose 1-diphosphate. Its pathway is purine metabolism; IMP biosynthesis via salvage pathway; IMP from hypoxanthine: step 1/1. It functions in the pathway purine metabolism; GMP biosynthesis via salvage pathway; GMP from guanine: step 1/1. In terms of biological role, purine salvage pathway enzyme that catalyzes the transfer of the ribosyl-5-phosphate group from 5-phospho-alpha-D-ribose 1-diphosphate (PRPP) to the N9 position of the 6-oxopurines hypoxanthine and guanine to form the corresponding ribonucleotides IMP (inosine 5'-monophosphate) and GMP (guanosine 5'-monophosphate), with the release of PPi. The polypeptide is Hypoxanthine-guanine phosphoribosyltransferase (hpt) (Streptococcus pneumoniae serotype 4 (strain ATCC BAA-334 / TIGR4)).